Here is a 112-residue protein sequence, read N- to C-terminus: Omega-agatoxin-1A (112 aa).

The first 19 residues, 1 to 19, serve as a signal peptide directing secretion; it reads MMKFVVFLACLFVAAHSFA. The propeptide occupies 20–36; sequence VEGEEEYFEAEVPELER. The propeptide at 103-109 is glu-rich; that stretch reads RSEESER.

The protein belongs to the neurotoxin 04 (omega-agtx) family. 01 (type I omega-agtx) subfamily. As to quaternary structure, heterodimer of two subunits, a major chain and a minor chain, linked by a disulfide bond. In terms of processing, proteolytically processed to yield the major and the minor chains. As to expression, expressed by the venom gland.

The protein resides in the secreted. Its function is as follows. Omega-agatoxins are antagonists of voltage-gated calcium channels. They block insect neuromuscular transmission presynaptically. This toxin is a blocker of L-type calcium channels (Cav/CACNA1). This is Omega-agatoxin-1A from Agelenopsis aperta (North American funnel-web spider).